The chain runs to 151 residues: Caveolin-3 (151 aa).

Residues 1–83 (MMTEEHTDLE…RLLSTLLGVP (83 aa)) are Cytoplasmic-facing. Lys38 participates in a covalent cross-link: Glycyl lysine isopeptide (Lys-Gly) (interchain with G-Cter in SUMO3). A required for interaction with DAG1 region spans residues 64-114 (TFTVSKYWCYRLLSTLLGVPLALLWGFLFACISFCHIWAVVPCIKSYLIEI). Residues 84 to 104 (LALLWGFLFACISFCHIWAVV) constitute an intramembrane region (helical). Residues 105–151 (PCIKSYLIEIQCISHIYSLCIRTFCNPLFAALGQVCSNIKVVLRREG) are Cytoplasmic-facing.

It belongs to the caveolin family. As to quaternary structure, homooligomer. Interacts with DYSF. Interacts with DLG1 and KCNA5; forms a ternary complex. Interacts with DAG1 (via its C-terminal); the interaction prevents binding of DAG1 with DMD. Interacts with TRIM72. Interacts with MUSK; may regulate MUSK signaling. Interacts with POPDC1. Interacts with CAVIN1, CAVIN2 and CAVIN4. In terms of processing, sumoylation with SUMO3 by PIAS4 may reduce agonist-induced internalization and desensitization of adrenergic receptor ABRD2. As to expression, expressed predominantly in muscle.

It is found in the golgi apparatus membrane. Its subcellular location is the cell membrane. It localises to the membrane. The protein resides in the caveola. The protein localises to the sarcolemma. Functionally, may act as a scaffolding protein within caveolar membranes. Interacts directly with G-protein alpha subunits and can functionally regulate their activity. May also regulate voltage-gated potassium channels. Plays a role in the sarcolemma repair mechanism of both skeletal muscle and cardiomyocytes that permits rapid resealing of membranes disrupted by mechanical stress. Mediates the recruitment of CAVIN2 and CAVIN3 proteins to the caveolae. The chain is Caveolin-3 from Mus musculus (Mouse).